We begin with the raw amino-acid sequence, 517 residues long: Benzoate 4-monooxygenase bphA (517 aa).

Residues 4–24 traverse the membrane as a helical segment; it reads LLLSPYGAYLGLALLVLYYLL. Residues asparagine 282 and asparagine 325 are each glycosylated (N-linked (GlcNAc...) asparagine). A heme-binding site is contributed by cysteine 461.

The protein belongs to the cytochrome P450 family. Requires heme as cofactor.

The protein resides in the membrane. The catalysed reaction is benzoate + reduced [NADPH--hemoprotein reductase] + O2 = 4-hydroxybenzoate + oxidized [NADPH--hemoprotein reductase] + H2O + H(+). In terms of biological role, cytochrome P450 monooxygenase; part of the benzoic acid degradation pathway also known as the protocatechuic acid pathway. Benzoic acid debradation begins with the conversion of benzoic acid into 4-hydroxybenzoic acid through hydroxylation by the benzoate-4-monooxygenase bphA, and its partner NADPH-cytochrome P450 reductase cprA which act as a mediator in electron donation from NADPH. 4-Hydroxybenzoic acid is then converted into 3,4-dihydroxybenzoic acid (also called protocatechuic acid) by the p-hydroxybenzoate-m-hydroxylase phhA. Protocatechuic acid is converted into 3-carboxy-cis,cis-muconic acid by the intradiol ring-cleavage dioxygenase prcA, which is further metabolized through the 3-oxoadipate pathway to finally enter the tricarboxylic acid cycle (TCA). Responsible for cytochrome P450 dependent benzoate hydroxylation in microsomes; requires cprA as the mediator in electron donation from NADPH. The polypeptide is Benzoate 4-monooxygenase bphA (Aspergillus niger).